Reading from the N-terminus, the 602-residue chain is MKVITFSRRSALASIVATCLMSTPALAATAQAPQKLQIPTLSYDDHSVMLVWDTPEDTSNITDYQIYQNGQLIGLASQNNDKNSPAKPYISAFYKSDAANFHHRIVLQNAKVDGLKAGTDYQFTVRTVYADGTTSNDSNTVTTTTTAVPKVINITQYGAKGDGTTLNTSAIQKAIDACPTGCRIDVPAGVFKTGALWLKSDMTLNLLQGATLLGSDNAADYPDAYKIYSYVSQVRPASLLNAIDKNSSAVGTFKNIRIVGKGIIDGNGWKRSADAKDELGNTLPQYVKSDNSKVSKDGILAKNQVAAAVATGMDTKTAYSQRRSSLVTLRGVQNAYIADVTIRNPANHGIMFLESENVVENSVIHQTFNANNGDGVEFGNSQNIMVFNSVFDTGDDSINFAAGMGQDAQKQEPSQNAWLFNNFFRHGHGAVVLGSHTGAGIVDVLAENNVITQNDVGLRAKSAPAIGGGAHGIVFRNSAMKNLAKQAVIVTLSYADNNGTIDYTPAKVPARFYDFTVKNVTVQDSTGSNPAIEITGDSSKDIWHSQFIFSNMKLSGVSPTSISDLSDSQFNNLTFSNLRSGSSPWKFGTVKNVTVDGKTVTP.

The N-terminal stretch at 1–27 (MKVITFSRRSALASIVATCLMSTPALA) is a signal peptide. Positions 32-149 (APQKLQIPTL…TVTTTTTAVP (118 aa)) constitute a Fibronectin type-III domain. D395 acts as the Proton donor in catalysis. Residue H428 is part of the active site.

Belongs to the glycosyl hydrolase 28 family.

The protein localises to the secreted. The catalysed reaction is [(1-&gt;4)-alpha-D-galacturonosyl](n) + H2O = alpha-D-galacturonosyl-(1-&gt;4)-D-galacturonate + [(1-&gt;4)-alpha-D-galacturonosyl](n-2). Functionally, contributes significantly to bacterial utilization of polygalacturonate and the induction of pectate lyase in the presence of extracellular pectic polymers. This is Exo-poly-alpha-D-galacturonosidase (pehX) from Dickeya chrysanthemi (Pectobacterium chrysanthemi).